A 553-amino-acid polypeptide reads, in one-letter code: Undecaprenyl phosphate-alpha-4-amino-4-deoxy-L-arabinose arabinosyl transferase 2 (553 aa).

Transmembrane regions (helical) follow at residues 6-26 (ASKI…LFPL), 85-105 (FAVR…IYLL), 115-135 (VAFV…VGTY), 137-157 (VLDP…FWAL), 178-198 (MAFM…MIPV), 208-228 (MLLY…PWVL), 261-281 (FWYY…LLPG), 295-315 (ELFF…IAKG), 317-337 (LPTY…KYGV), 352-372 (GYIN…IQLV), 386-406 (WVLA…CSTL), and 410-430 (HWLW…QAIP).

Belongs to the glycosyltransferase 83 family.

The protein resides in the cell inner membrane. The enzyme catalyses 4-amino-4-deoxy-alpha-L-arabinopyranosyl di-trans,octa-cis-undecaprenyl phosphate + lipid IVA = lipid IIA + di-trans,octa-cis-undecaprenyl phosphate.. It participates in lipopolysaccharide metabolism; 4-amino-4-deoxy-beta-L-arabinose-lipid A biosynthesis. Catalyzes the transfer of the L-Ara4N moiety of the glycolipid undecaprenyl phosphate-alpha-L-Ara4N to lipid A. The modified arabinose is attached to lipid A and is required for resistance to polymyxin and cationic antimicrobial peptides. The protein is Undecaprenyl phosphate-alpha-4-amino-4-deoxy-L-arabinose arabinosyl transferase 2 of Proteus mirabilis (strain HI4320).